Reading from the N-terminus, the 312-residue chain is Olfactory receptor 14C36 (312 aa).

At 1–23 (MPNSTTVMEFLLMRFSDVWTLQI) the chain is on the extracellular side. Asn3 carries an N-linked (GlcNAc...) asparagine glycan. A helical membrane pass occupies residues 24–44 (LHSASFFMLYLVTLMGNILIV). Residues 45-52 (TVTTCDSS) lie on the Cytoplasmic side of the membrane. Residues 53-73 (LHMPMYFFLRNLSILDACYIS) form a helical membrane-spanning segment. The Extracellular segment spans residues 74–97 (VTVPTSCVNSLLDSTTISKAGCVA). Cys95 and Cys187 are joined by a disulfide. A helical transmembrane segment spans residues 98-118 (QVFLVVFFVYVELLFLTIMAH). Residues 119-137 (DRYVAVCQPLHYPVIVNSR) are Cytoplasmic-facing. A helical membrane pass occupies residues 138–158 (ICIQMTLASLLSGLVYAGMHT). Residues 159 to 194 (GSTFQLPFCRSNVIHQFFCDIPSLLKLSCSDTFSNE) are Extracellular-facing. A helical transmembrane segment spans residues 195–215 (VMIVVSALGVGGGCFIFIIRS). The Cytoplasmic portion of the chain corresponds to 216–235 (YIHIFSTVLGFPRGADRTKA). The helical transmembrane segment at 236–256 (FSTCIPHILVVSVFLSSCSSV) threads the bilayer. At 257 to 269 (YLRPPAIPAATQD) the chain is on the extracellular side. Residues 270–290 (LILSGFYSIMPPLFNPIIYSL) traverse the membrane as a helical segment. The Cytoplasmic segment spans residues 291–312 (RNKQIKVAIKKIMKRIFYSENV).

The protein belongs to the G-protein coupled receptor 1 family.

The protein localises to the cell membrane. Functionally, odorant receptor. The polypeptide is Olfactory receptor 14C36 (OR14C36) (Homo sapiens (Human)).